Here is a 300-residue protein sequence, read N- to C-terminus: Diphthine methyl ester synthase (300 aa).

Residues Leu-9, Asp-85, Gly-88, 113-114 (SV), and Leu-164 contribute to the S-adenosyl-L-methionine site. Ser-172 carries the post-translational modification Phosphoserine. Residues Leu-222 and His-247 each coordinate S-adenosyl-L-methionine. Ser-298 carries the phosphoserine modification.

It belongs to the diphthine synthase family.

Its subcellular location is the cytoplasm. The catalysed reaction is 2-[(3S)-amino-3-carboxypropyl]-L-histidyl-[translation elongation factor 2] + 4 S-adenosyl-L-methionine = diphthine methyl ester-[translation elongation factor 2] + 4 S-adenosyl-L-homocysteine + 3 H(+). The protein operates within protein modification; peptidyl-diphthamide biosynthesis. Its function is as follows. S-adenosyl-L-methionine-dependent methyltransferase that catalyzes four methylations of the modified target histidine residue in translation elongation factor 2 (EF-2), to form an intermediate called diphthine methyl ester. The four successive methylation reactions represent the second step of diphthamide biosynthesis. This chain is Diphthine methyl ester synthase (DPH5), found in Saccharomyces cerevisiae (strain ATCC 204508 / S288c) (Baker's yeast).